The primary structure comprises 214 residues: UPF0111 protein MJ0629 (214 aa).

Belongs to the UPF0111 family.

The protein is UPF0111 protein MJ0629 of Methanocaldococcus jannaschii (strain ATCC 43067 / DSM 2661 / JAL-1 / JCM 10045 / NBRC 100440) (Methanococcus jannaschii).